Here is a 287-residue protein sequence, read N- to C-terminus: Ribonuclease Z (287 aa).

Zn(2+) is bound by residues His64, His66, Asp68, His69, His124, Asp191, and His250. Residue Asp68 is the Proton acceptor of the active site.

This sequence belongs to the RNase Z family. In terms of assembly, homodimer. Requires Zn(2+) as cofactor.

It catalyses the reaction Endonucleolytic cleavage of RNA, removing extra 3' nucleotides from tRNA precursor, generating 3' termini of tRNAs. A 3'-hydroxy group is left at the tRNA terminus and a 5'-phosphoryl group is left at the trailer molecule.. In terms of biological role, zinc phosphodiesterase, which displays some tRNA 3'-processing endonuclease activity. Probably involved in tRNA maturation, by removing a 3'-trailer from precursor tRNA. The chain is Ribonuclease Z from Pyrobaculum neutrophilum (strain DSM 2338 / JCM 9278 / NBRC 100436 / V24Sta) (Thermoproteus neutrophilus).